The following is a 384-amino-acid chain: Terpene cyclase ascI (384 aa).

The first 25 residues, 1–25, serve as a signal peptide directing secretion; the sequence is MPQLAGKLILAGLIPLGAWVLHGFA. Residues 82–102 form a helical membrane-spanning segment; sequence LSLHAFMFAGQGVPLLVLNML. Asparagine 109 is a glycosylation site (N-linked (GlcNAc...) asparagine). Transmembrane regions (helical) follow at residues 119–139, 164–184, 194–214, and 235–255; these read VFGI…YLFL, AVGF…SLPH, VLSV…AYFA, and GAVY…TFAI. Asparagine 258 carries an N-linked (GlcNAc...) asparagine glycan. A run of 2 helical transmembrane segments spans residues 291–311 and 330–350; these read WFLQ…AIGI and IALR…ALSL. Asparagine 372 is a glycosylation site (N-linked (GlcNAc...) asparagine).

This sequence belongs to the membrane-bound ascI terpene cyclase family.

The protein resides in the membrane. It catalyses the reaction 16-hydroxy-ilicicolin A epoxide = ascofuranol. The protein operates within secondary metabolite biosynthesis; terpenoid biosynthesis. Its function is as follows. Epoxide hydrolase; part of the asc-2 gene cluster that mediates the biosynthesis of ascofuranone, a strong inhibitor of cyanide-insensitive alternative oxidases and a promising drug candidate against African trypanosomiasis. The first step in the pathway is performed by the non-reducing polyketide synthase ascC that produces orsellinic acid by condensing acetyl-CoA with 3 malonyl-CoA units. Orsellinic acid is then prenylated by the prenyltransferase ascA to yield ilicicolinic acid B. Ilicicolinic acid B is further reduced to ilicicolin B by the reductase ascB. The halogenase ascD then chlorinates ilicicolin B to produce ilicicolin A which is converted to ilicicolin A epoxide by the cytochrome P450 monooxygenase ascE that catalyzes stereoselective epoxidation of the terminal double bond of the prenyl group. Ilicicolin A epoxide is the last common precursor for the biosynthesis of ascofuranone and ascochlorin. The terpene cyclase ascF produces a monocyclic terpene, and the cyclization reaction is proposed to be initiated by protonation of the terminal epoxide of ilicicolin A epoxide to generate a monocyclic tertiarycation, which is followed by a series of hydride and methyl shifts with abstraction of proton, leading to the formation of the (14S,15R,19R)-trimethylcyclohexanone ring structure of ilicicolin C, which is finally reduced to ascochlorin by the dehydrogenase ascG. On the other hand, ilicicolin A epoxide is hydroxylated by the cytochrome P450 monooxygenase ascH, and the resultant product is cyclized by the terpene cyclase ascI to ascofuranol via protonation-initiated epoxide ring opening, which facilitates the 6-endo-tet cyclization to form the tetrahy-drofuran ring. Finally, ascofuranol is oxidized into ascofuranone by ascJ. In Acremonium egyptiacum (Oospora egyptiaca), this protein is Terpene cyclase ascI.